We begin with the raw amino-acid sequence, 1533 residues long: Glycogen debranching enzyme (1533 aa).

A Phosphoserine modification is found at Ser-64. Active-site residues include Asp-527, His-530, and Asp-628.

This sequence belongs to the glycogen debranching enzyme family. Monomer. Interacts with NHLRC1/malin. Ubiquitinated.

Its subcellular location is the cytoplasm. The catalysed reaction is Transfers a segment of a (1-&gt;4)-alpha-D-glucan to a new position in an acceptor, which may be glucose or a (1-&gt;4)-alpha-D-glucan.. The enzyme catalyses Hydrolysis of (1-&gt;6)-alpha-D-glucosidic branch linkages in glycogen phosphorylase limit dextrin.. Multifunctional enzyme acting as 1,4-alpha-D-glucan:1,4-alpha-D-glucan 4-alpha-D-glycosyltransferase and amylo-1,6-glucosidase in glycogen degradation. This chain is Glycogen debranching enzyme (AGL), found in Canis lupus familiaris (Dog).